We begin with the raw amino-acid sequence, 662 residues long: DNA ligase (662 aa).

Residues 34-38 (DYEYD), 83-84 (SI), and E113 each bind NAD(+). K115 acts as the N6-AMP-lysine intermediate in catalysis. R136, E172, K286, and K310 together coordinate NAD(+). Zn(2+)-binding residues include C404, C407, C422, and C427. The region spanning 583 to 662 (KSGSTCFGKA…EAFTNLIHLE (80 aa)) is the BRCT domain.

It belongs to the NAD-dependent DNA ligase family. LigA subfamily. Mg(2+) serves as cofactor. The cofactor is Mn(2+).

It carries out the reaction NAD(+) + (deoxyribonucleotide)n-3'-hydroxyl + 5'-phospho-(deoxyribonucleotide)m = (deoxyribonucleotide)n+m + AMP + beta-nicotinamide D-nucleotide.. In terms of biological role, DNA ligase that catalyzes the formation of phosphodiester linkages between 5'-phosphoryl and 3'-hydroxyl groups in double-stranded DNA using NAD as a coenzyme and as the energy source for the reaction. It is essential for DNA replication and repair of damaged DNA. This chain is DNA ligase, found in Chlamydia pneumoniae (Chlamydophila pneumoniae).